The primary structure comprises 513 residues: DNA damage response protein kinase DUN1 (513 aa).

Residues 1–12 (MSLSTKREHSGD) are compositionally biased toward basic and acidic residues. Residues 1-29 (MSLSTKREHSGDVTDSSFKRQQRSNKPSS) are disordered. At S10 the chain carries Phosphoserine. Residues 56–112 (TTIGRSRSCDVILSEPDISTFHAEFHLLQMDVDNFQRNLINVIDKSRNGTFINGNRL) form the FHA domain. S139 is modified (phosphoserine). In terms of domain architecture, Protein kinase spans 200–480 (YLLGKELGAG…IDEALNHPWF (281 aa)). ATP contacts are provided by residues 206–214 (LGAGHYALV) and K229. The active-site Proton acceptor is D328. Phosphothreonine is present on T380.

The protein belongs to the protein kinase superfamily. CAMK Ser/Thr protein kinase family. CHEK2 subfamily. Interacts with the PAB-dependent poly(A)-nuclease (PAN) complex regulatory subunit PAN3 via its forkhead-associated (FHA) domain. Autophosphorylation increases in response to DNA damage.

The protein localises to the nucleus. The enzyme catalyses L-seryl-[protein] + ATP = O-phospho-L-seryl-[protein] + ADP + H(+). It carries out the reaction L-threonyl-[protein] + ATP = O-phospho-L-threonyl-[protein] + ADP + H(+). Its function is as follows. Transducer of the DNA damage signal. Phosphorylates SML1 on serine residues. Cooperates with the PAN deadenylation complex in the regulation of RAD5 mRNA levels and cell survival in response to replicational stress. This chain is DNA damage response protein kinase DUN1 (DUN1), found in Saccharomyces cerevisiae (strain ATCC 204508 / S288c) (Baker's yeast).